A 66-amino-acid polypeptide reads, in one-letter code: Large ribosomal subunit protein bL35 (66 aa).

This sequence belongs to the bacterial ribosomal protein bL35 family.

This Caulobacter vibrioides (strain ATCC 19089 / CIP 103742 / CB 15) (Caulobacter crescentus) protein is Large ribosomal subunit protein bL35.